A 420-amino-acid chain; its full sequence is PHO85 cyclin-6 (420 aa).

Disordered stretches follow at residues 1–82 (MSIK…ESSF), 134–155 (QGTH…DTSN), and 268–321 (VTTT…GVQR). Low complexity predominate over residues 7–22 (SPSSTNASSSPKSTYS). Position 61 is a phosphoserine (Ser61). Over residues 134 to 143 (QGTHTVQSST) the composition is skewed to polar residues. Positions 277–296 (AKHESPSNESSLDKANRGAD) are enriched in basic and acidic residues. 2 positions are modified to phosphoserine: Ser281 and Ser312. Positions 307–316 (NENDDSDDEN) are enriched in acidic residues. Thr317 bears the Phosphothreonine mark.

The protein belongs to the cyclin family. PHO80 subfamily. In terms of assembly, forms a cyclin-CDK complex with PHO85. Interacts with the substrate protein YJL084C. Interacts with elongin-C, which stabilizes PCL6. Interacts with the CDK inhibitor (CKI) PHO81.

It localises to the cytoplasm. It is found in the nucleus. Its function is as follows. Cyclin partner of the cyclin-dependent kinase (CDK) PHO85. Together with cyclin PCL7, controls glycogen phosphorylase and glycogen synthase activities in response to nutrient availablility. The PCL6-PHO85 cyclin-CDK holoenzyme has GLC8 kinase activity and phosphorylates and inactivates the phosphatase PP1-2 inhibitor GLC8, causing activation of PP1-2, which then dephosphorylates and activates glycogen phosphorylase. PCL6-PHO85 also phosphorylates YJL084C. The chain is PHO85 cyclin-6 (PCL6) from Saccharomyces cerevisiae (strain ATCC 204508 / S288c) (Baker's yeast).